We begin with the raw amino-acid sequence, 327 residues long: Zinc finger C2HC domain-containing protein 1A (327 aa).

Residues 13–42 (ELVPCKICGRSFFPKVLKKHVPICQKTAAK) form a C2HC/C3H-type 1 zinc finger. The Zn(2+) site is built by Cys17, Cys20, His32, and Cys36. Disordered regions lie at residues 40-96 (AAKR…KHEE) and 108-131 (NQVIKDGGPLPPPPPPSYDPDYIQ). Residues 46–56 (VFDSGRQRAEG) are compositionally biased toward basic and acidic residues. Residues 63–76 (KPIKPKLQSSSSSS) show a composition bias toward low complexity. The segment covering 116 to 125 (PLPPPPPPSY) has biased composition (pro residues). The segment at 128 to 157 (DYIQCPYCQRRFGENAADRHIKFCKEQASR) adopts a C2HC/C3H-type 2 zinc-finger fold. Residues Cys132, Cys135, His147, and Cys151 each coordinate Zn(2+). The segment at 154–271 (QASRISNKSK…NPSTGIGMNK (118 aa)) is disordered. Polar residues predominate over residues 187–199 (NSPTASSVSSRLP). The segment covering 211-229 (GIPSSKPSSTGSIKSTPSG) has biased composition (low complexity). Composition is skewed to polar residues over residues 233–245 (LRNNSSSLTSPPS) and 255–267 (VSQSSLRNPSTGI).

This sequence belongs to the ZC2HC1 family. Zn(2+) serves as cofactor.

This Danio rerio (Zebrafish) protein is Zinc finger C2HC domain-containing protein 1A (zc2hc1a).